We begin with the raw amino-acid sequence, 501 residues long: Protein anon-37Cs (501 aa).

The protein resides in the cytoplasm. Functionally, has a non-vital function. This chain is Protein anon-37Cs (anon-37Cs), found in Drosophila simulans (Fruit fly).